The sequence spans 295 residues: Ribosomal protein L11 methyltransferase (295 aa).

Residues Thr-146, Gly-167, Asp-189, and Asn-231 each contribute to the S-adenosyl-L-methionine site.

This sequence belongs to the methyltransferase superfamily. PrmA family.

The protein localises to the cytoplasm. It carries out the reaction L-lysyl-[protein] + 3 S-adenosyl-L-methionine = N(6),N(6),N(6)-trimethyl-L-lysyl-[protein] + 3 S-adenosyl-L-homocysteine + 3 H(+). Functionally, methylates ribosomal protein L11. This chain is Ribosomal protein L11 methyltransferase, found in Vibrio vulnificus (strain YJ016).